The following is a 481-amino-acid chain: Glutamate--tRNA ligase (481 aa).

The 'HIGH' region motif lies at 10–20; it reads PSPTGHLHIGN. The short motif at 251-255 is the 'KMSKS' region element; the sequence is KLSKR. Lys-254 provides a ligand contact to ATP.

It belongs to the class-I aminoacyl-tRNA synthetase family. Glutamate--tRNA ligase type 1 subfamily. In terms of assembly, monomer.

It is found in the cytoplasm. It catalyses the reaction tRNA(Glu) + L-glutamate + ATP = L-glutamyl-tRNA(Glu) + AMP + diphosphate. Catalyzes the attachment of glutamate to tRNA(Glu) in a two-step reaction: glutamate is first activated by ATP to form Glu-AMP and then transferred to the acceptor end of tRNA(Glu). The chain is Glutamate--tRNA ligase from Exiguobacterium sibiricum (strain DSM 17290 / CCUG 55495 / CIP 109462 / JCM 13490 / 255-15).